We begin with the raw amino-acid sequence, 900 residues long: DNA mismatch repair protein MutS (900 aa).

637 to 644 (GPNMAGKS) is an ATP binding site.

Belongs to the DNA mismatch repair MutS family.

In terms of biological role, this protein is involved in the repair of mismatches in DNA. It is possible that it carries out the mismatch recognition step. This protein has a weak ATPase activity. The polypeptide is DNA mismatch repair protein MutS (Methanosarcina acetivorans (strain ATCC 35395 / DSM 2834 / JCM 12185 / C2A)).